Here is a 364-residue protein sequence, read N- to C-terminus: 3-isopropylmalate dehydrogenase (364 aa).

Residue 78–89 (GPKWGTGAVRPE) coordinates NAD(+). Substrate contacts are provided by arginine 96, arginine 106, arginine 135, and aspartate 224. 3 residues coordinate Mg(2+): aspartate 224, aspartate 249, and aspartate 253. 288–299 (GSAPDLPANKVN) is a binding site for NAD(+).

Belongs to the isocitrate and isopropylmalate dehydrogenases family. As to quaternary structure, homodimer. It depends on Mg(2+) as a cofactor. Requires Mn(2+) as cofactor.

It localises to the cytoplasm. It carries out the reaction (2R,3S)-3-isopropylmalate + NAD(+) = 4-methyl-2-oxopentanoate + CO2 + NADH. Its pathway is amino-acid biosynthesis; L-leucine biosynthesis; L-leucine from 3-methyl-2-oxobutanoate: step 3/4. Catalyzes the oxidation of 3-carboxy-2-hydroxy-4-methylpentanoate (3-isopropylmalate) to 3-carboxy-4-methyl-2-oxopentanoate. The product decarboxylates to 4-methyl-2 oxopentanoate. This chain is 3-isopropylmalate dehydrogenase (LEU2), found in Wickerhamomyces anomalus (strain ATCC 8168 / CBS 5759 / DSM 6766 / JCM 3585 / IAM 12210 / NCYC 432 / NBRC 10213 / NRRL Y-366 / AJ 5027) (Yeast).